The chain runs to 215 residues: 3-dehydroquinate dehydratase (215 aa).

3-dehydroquinate-binding positions include 27–29 (EVR) and arginine 54. The active-site Proton donor/acceptor is histidine 112. Lysine 139 functions as the Schiff-base intermediate with substrate in the catalytic mechanism. The 3-dehydroquinate site is built by arginine 176 and glutamine 198.

This sequence belongs to the type-I 3-dehydroquinase family. As to quaternary structure, homodimer.

The catalysed reaction is 3-dehydroquinate = 3-dehydroshikimate + H2O. The protein operates within metabolic intermediate biosynthesis; chorismate biosynthesis; chorismate from D-erythrose 4-phosphate and phosphoenolpyruvate: step 3/7. Its function is as follows. Involved in the third step of the chorismate pathway, which leads to the biosynthesis of aromatic amino acids. Catalyzes the cis-dehydration of 3-dehydroquinate (DHQ) and introduces the first double bond of the aromatic ring to yield 3-dehydroshikimate. The chain is 3-dehydroquinate dehydratase from Thermococcus onnurineus (strain NA1).